The chain runs to 206 residues: dITP/XTP pyrophosphatase (206 aa).

Position 7–12 (7–12 (SRNPKK)) interacts with substrate. The Proton acceptor role is filled by aspartate 72. Aspartate 72 lines the Mg(2+) pocket. Substrate-binding positions include serine 73, 155 to 158 (FGYD), lysine 178, and 183 to 184 (HR).

It belongs to the HAM1 NTPase family. Homodimer. Mg(2+) is required as a cofactor.

The enzyme catalyses XTP + H2O = XMP + diphosphate + H(+). It catalyses the reaction dITP + H2O = dIMP + diphosphate + H(+). The catalysed reaction is ITP + H2O = IMP + diphosphate + H(+). Its function is as follows. Pyrophosphatase that catalyzes the hydrolysis of nucleoside triphosphates to their monophosphate derivatives, with a high preference for the non-canonical purine nucleotides XTP (xanthosine triphosphate), dITP (deoxyinosine triphosphate) and ITP. Seems to function as a house-cleaning enzyme that removes non-canonical purine nucleotides from the nucleotide pool, thus preventing their incorporation into DNA/RNA and avoiding chromosomal lesions. The chain is dITP/XTP pyrophosphatase from Mycobacteroides abscessus (strain ATCC 19977 / DSM 44196 / CCUG 20993 / CIP 104536 / JCM 13569 / NCTC 13031 / TMC 1543 / L948) (Mycobacterium abscessus).